The sequence spans 206 residues: Dephospho-CoA kinase (206 aa).

The 201-residue stretch at 4-204 (VIGLTGGIAS…EGYIESHSED (201 aa)) folds into the DPCK domain. 12-17 (ASGKST) serves as a coordination point for ATP.

The protein belongs to the CoaE family.

It is found in the cytoplasm. It catalyses the reaction 3'-dephospho-CoA + ATP = ADP + CoA + H(+). It functions in the pathway cofactor biosynthesis; coenzyme A biosynthesis; CoA from (R)-pantothenate: step 5/5. Its function is as follows. Catalyzes the phosphorylation of the 3'-hydroxyl group of dephosphocoenzyme A to form coenzyme A. This is Dephospho-CoA kinase from Staphylococcus saprophyticus subsp. saprophyticus (strain ATCC 15305 / DSM 20229 / NCIMB 8711 / NCTC 7292 / S-41).